The sequence spans 229 residues: MPKHGKRYRALLEKVDPNKIYTIDEAAHLVKELATAKFDETVEVHAKLGIDPRRSDQNVRGTVSLPHGLGKQVRVLAIAKGEKIKEAEEAGADYVGGEEIIQKILDGWMDFDAVVATPDVMGAVGSKLGRILGPRGLLPNPKAGTVGFNIGEIIREIKAGRIEFRNDKTGAIHAPVGKASFPPEKLADNIRAFIRALEAHKPEGAKGTFLRSVYVTTTMGPSVRINPHS.

Belongs to the universal ribosomal protein uL1 family. In terms of assembly, part of the 50S ribosomal subunit.

Its function is as follows. Binds directly to 23S rRNA. The L1 stalk is quite mobile in the ribosome, and is involved in E site tRNA release. Protein L1 is also a translational repressor protein, it controls the translation of the L11 operon by binding to its mRNA. In Thermus thermophilus (strain ATCC BAA-163 / DSM 7039 / HB27), this protein is Large ribosomal subunit protein uL1.